Reading from the N-terminus, the 102-residue chain is Small ribosomal subunit protein uS10 (102 aa).

Belongs to the universal ribosomal protein uS10 family. Part of the 30S ribosomal subunit.

In terms of biological role, involved in the binding of tRNA to the ribosomes. This Rhodospirillum centenum (strain ATCC 51521 / SW) protein is Small ribosomal subunit protein uS10.